A 187-amino-acid chain; its full sequence is UPF0301 protein VV2869 (187 aa).

The protein belongs to the UPF0301 (AlgH) family.

This Vibrio vulnificus (strain YJ016) protein is UPF0301 protein VV2869.